The chain runs to 367 residues: Riboflavin biosynthesis protein RibD (367 aa).

Residues 1–123 form the CMP/dCMP-type deaminase domain; the sequence is MQDEYYMARA…RLQQAGIDVS (123 aa). Residues 1–145 are deaminase; sequence MQDEYYMARA…KGFLKRMRTG (145 aa). Residue H50 participates in Zn(2+) binding. The active-site Proton donor is the E52. Zn(2+) is bound by residues C75 and C84. Residues 146 to 367 form a reductase region; the sequence is FPYIQLKLGA…PDVCLHLVGA (222 aa). 161–164 provides a ligand contact to NADP(+); that stretch reads TAMA. Position 168 (S168) interacts with substrate. W170 provides a ligand contact to NADP(+). R184 lines the substrate pocket. The NADP(+) site is built by T196 and D200. Substrate is bound by residues L204 and R207. S234 lines the NADP(+) pocket. E299 serves as a coordination point for substrate. Residue 301–304 participates in NADP(+) binding; sequence GPTL.

It in the N-terminal section; belongs to the cytidine and deoxycytidylate deaminase family. This sequence in the C-terminal section; belongs to the HTP reductase family. As to quaternary structure, homodimer. Zn(2+) is required as a cofactor.

The enzyme catalyses 2,5-diamino-6-hydroxy-4-(5-phosphoribosylamino)-pyrimidine + H2O + H(+) = 5-amino-6-(5-phospho-D-ribosylamino)uracil + NH4(+). It carries out the reaction 5-amino-6-(5-phospho-D-ribitylamino)uracil + NADP(+) = 5-amino-6-(5-phospho-D-ribosylamino)uracil + NADPH + H(+). Its pathway is cofactor biosynthesis; riboflavin biosynthesis; 5-amino-6-(D-ribitylamino)uracil from GTP: step 2/4. It functions in the pathway cofactor biosynthesis; riboflavin biosynthesis; 5-amino-6-(D-ribitylamino)uracil from GTP: step 3/4. Its function is as follows. Converts 2,5-diamino-6-(ribosylamino)-4(3h)-pyrimidinone 5'-phosphate into 5-amino-6-(ribosylamino)-2,4(1h,3h)-pyrimidinedione 5'-phosphate. The chain is Riboflavin biosynthesis protein RibD (ribD) from Escherichia coli (strain K12).